The sequence spans 316 residues: MSDSLRIIFAGTPDFAARHLDALIDAKQQVVGVFTQPDRPAGRGNRLTPSPVKELAERHDLPVFQPASLRKPEGQRSVAELNADIMVVVAYGLILPQAVLDLPLLGCINVHGSLLPRWRGAAPIQRALWAGDDRTGVTIMQMDAGLDTGAMLHKAVCAIQHDDTSASLYDKLAQIGPNALLSTLTQIAAGRAVAESQDNALATYADKLSKEEARLDWRLPAAQLERCIRAFNPWPISYFSLAEQPIKVWAAGVDDGQTSSHAPGTILAADKAGIHIATGAGVLTLTQLQPAGKKAMSVQDLLNSRRESFIPGTVLD.

113-116 (SLLP) contacts (6S)-5,6,7,8-tetrahydrofolate.

Belongs to the Fmt family.

It carries out the reaction L-methionyl-tRNA(fMet) + (6R)-10-formyltetrahydrofolate = N-formyl-L-methionyl-tRNA(fMet) + (6S)-5,6,7,8-tetrahydrofolate + H(+). Its function is as follows. Attaches a formyl group to the free amino group of methionyl-tRNA(fMet). The formyl group appears to play a dual role in the initiator identity of N-formylmethionyl-tRNA by promoting its recognition by IF2 and preventing the misappropriation of this tRNA by the elongation apparatus. The sequence is that of Methionyl-tRNA formyltransferase from Sodalis glossinidius (strain morsitans).